Reading from the N-terminus, the 162-residue chain is Ribosome-binding factor A (162 aa).

Residues 124-162 are disordered; that stretch reads ARVRSGAKPAGEADPYRESGSGVEPGRDGSIGDDDQPEY.

It belongs to the RbfA family. In terms of assembly, monomer. Binds 30S ribosomal subunits, but not 50S ribosomal subunits or 70S ribosomes.

The protein resides in the cytoplasm. Functionally, one of several proteins that assist in the late maturation steps of the functional core of the 30S ribosomal subunit. Associates with free 30S ribosomal subunits (but not with 30S subunits that are part of 70S ribosomes or polysomes). Required for efficient processing of 16S rRNA. May interact with the 5'-terminal helix region of 16S rRNA. In Mycolicibacterium paratuberculosis (strain ATCC BAA-968 / K-10) (Mycobacterium paratuberculosis), this protein is Ribosome-binding factor A.